We begin with the raw amino-acid sequence, 230 residues long: 2-phytyl-1,4-naphtoquinone methyltransferase (230 aa).

The protein belongs to the class I-like SAM-binding methyltransferase superfamily. MenG/UbiE family.

It catalyses the reaction demethylphylloquinol + S-adenosyl-L-methionine = phylloquinol + S-adenosyl-L-homocysteine + H(+). It participates in cofactor biosynthesis; phylloquinone biosynthesis. Functionally, methyltransferase required for the conversion of 2-phytyl-1,4-beta-naphthoquinol to phylloquinol. In Nostoc punctiforme (strain ATCC 29133 / PCC 73102), this protein is 2-phytyl-1,4-naphtoquinone methyltransferase.